The sequence spans 158 residues: NAD(P)H-quinone oxidoreductase subunit J, chloroplastic (158 aa).

This sequence belongs to the complex I 30 kDa subunit family. As to quaternary structure, NDH is composed of at least 16 different subunits, 5 of which are encoded in the nucleus.

It localises to the plastid. It is found in the chloroplast thylakoid membrane. It catalyses the reaction a plastoquinone + NADH + (n+1) H(+)(in) = a plastoquinol + NAD(+) + n H(+)(out). The catalysed reaction is a plastoquinone + NADPH + (n+1) H(+)(in) = a plastoquinol + NADP(+) + n H(+)(out). In terms of biological role, NDH shuttles electrons from NAD(P)H:plastoquinone, via FMN and iron-sulfur (Fe-S) centers, to quinones in the photosynthetic chain and possibly in a chloroplast respiratory chain. The immediate electron acceptor for the enzyme in this species is believed to be plastoquinone. Couples the redox reaction to proton translocation, and thus conserves the redox energy in a proton gradient. The protein is NAD(P)H-quinone oxidoreductase subunit J, chloroplastic of Cryptomeria japonica (Japanese cedar).